Consider the following 1160-residue polypeptide: Carbamoyl phosphate synthase arginine-specific large chain, mitochondrial (1160 aa).

The tract at residues 81–478 (AEHEKVKKVV…SLQKALRQVD (398 aa)) is carboxyphosphate synthetic domain. Positions 208, 248, 254, 255, 285, 287, 292, 318, 319, 320, 361, and 375 each coordinate ATP. The 193-residue stretch at 212–404 (AKALNEINIP…LAYTAAKIAL (193 aa)) folds into the ATP-grasp 1 domain. Mg(2+) is bound by residues glutamine 361, glutamate 375, and asparagine 377. The Mn(2+) site is built by glutamine 361, glutamate 375, and asparagine 377. The tract at residues 479–623 (PSFLGFMAMP…YTSYNASSHD (145 aa)) is oligomerization domain. Residues 624 to 1012 (IDFNEHGTMV…AYWAALQSTQ (389 aa)) are carbamoyl phosphate synthetic domain. Positions 748 to 946 (SQILDKIGVD…FIDVATRSII (199 aa)) constitute an ATP-grasp 2 domain. ATP is bound by residues arginine 784, lysine 823, isoleucine 825, glutamate 830, glycine 855, valine 856, histidine 857, serine 858, glutamine 898, and glutamate 917. Residues glutamine 898, glutamate 917, and asparagine 919 each contribute to the Mg(2+) site. Mn(2+) contacts are provided by glutamine 898, glutamate 917, and asparagine 919. The segment at 1013-1144 (NFKIPLPGQG…PSVLSEKKEM (132 aa)) is allosteric domain. One can recognise an MGS-like domain in the interval 1014 to 1160 (FKIPLPGQGI…WSEWIGSHDL (147 aa)).

It belongs to the CarB family. As to quaternary structure, heterodimer composed of 2 chains; the small (or glutamine) chain promotes the hydrolysis of glutamine to ammonia, which is used by the large (or ammonia) chain to synthesize carbamoyl phosphate. Mg(2+) serves as cofactor. The cofactor is Mn(2+).

The protein localises to the mitochondrion. The catalysed reaction is hydrogencarbonate + L-glutamine + 2 ATP + H2O = carbamoyl phosphate + L-glutamate + 2 ADP + phosphate + 2 H(+). It carries out the reaction hydrogencarbonate + NH4(+) + 2 ATP = carbamoyl phosphate + 2 ADP + phosphate + 2 H(+). The protein operates within amino-acid biosynthesis; L-arginine biosynthesis; carbamoyl phosphate from bicarbonate: step 1/1. Large subunit of the arginine-specific carbamoyl phosphate synthase (CPSase). CPSase catalyzes the formation of carbamoyl phosphate from the ammonia moiety of glutamine, hydrogencarbonate, and phosphate donated by ATP, the first step of the arginine biosynthetic pathway. The large subunit (synthetase) binds the substrates ammonia (free or transferred from glutamine from the small subunit), hydrogencarbonate and ATP and carries out an ATP-coupled ligase reaction, activating hydrogencarbonate by forming carboxy phosphate which reacts with ammonia to form carbamoyl phosphate. This is Carbamoyl phosphate synthase arginine-specific large chain, mitochondrial (arg4) from Schizosaccharomyces pombe (strain 972 / ATCC 24843) (Fission yeast).